Consider the following 64-residue polypeptide: Defensin beta 4A (64 aa).

The first 23 residues, 1 to 23, serve as a signal peptide directing secretion; sequence MRVLYLLFSFLFIFLMPLPGVFG. Cystine bridges form between Cys31-Cys60, Cys38-Cys53, and Cys43-Cys61. Residues 33–48 form a phosphatidylinositol 4,5-bisphosphate (PIP2) binding region; that stretch reads KNGAICHPVFCPRRYK.

The protein belongs to the beta-defensin family. LAP/TAP subfamily. As to quaternary structure, monomer. Homodimer.

It is found in the secreted. In terms of biological role, exhibits antimicrobial activity against Gram-negative bacteria and Gram-positive bacteria, with highest activity against Gram-negative bacteria. Antimicrobial activity against P.aruginosa seems to be salt-sensitive and is reduced with high salt concentrations greater than 25 mM. Also exhibits antimicrobial activity against the yeast C.albicans. Permeabilizes C.albicans cell membranes via targeting plasma membrane lipid phosphatidylinositol 4,5-bisphosphate (PIP2), thereby leading to cell fragmentation and cell death. Acts as a ligand for C-C chemokine receptor CCR6. Binds to CCR6 and induces chemotactic activity of CCR6-expressing cells, such as immature dendritic cells and memory T cells. This Macaca mulatta (Rhesus macaque) protein is Defensin beta 4A (DEFB4A).